Consider the following 394-residue polypeptide: Phosphoglycerate kinase (394 aa).

Substrate-binding positions include 21 to 23, R37, 60 to 63, R119, and R152; these read DFN and HLGR. Residues K202, G293, E324, and 350–353 each bind ATP; that span reads GGDS.

It belongs to the phosphoglycerate kinase family. As to quaternary structure, monomer.

The protein localises to the cytoplasm. The enzyme catalyses (2R)-3-phosphoglycerate + ATP = (2R)-3-phospho-glyceroyl phosphate + ADP. Its pathway is carbohydrate degradation; glycolysis; pyruvate from D-glyceraldehyde 3-phosphate: step 2/5. In Caldanaerobacter subterraneus subsp. tengcongensis (strain DSM 15242 / JCM 11007 / NBRC 100824 / MB4) (Thermoanaerobacter tengcongensis), this protein is Phosphoglycerate kinase.